Reading from the N-terminus, the 355-residue chain is Peptide chain release factor 1 (355 aa).

Position 233 is an N5-methylglutamine (Q233).

This sequence belongs to the prokaryotic/mitochondrial release factor family. Post-translationally, methylated by PrmC. Methylation increases the termination efficiency of RF1.

It localises to the cytoplasm. Its function is as follows. Peptide chain release factor 1 directs the termination of translation in response to the peptide chain termination codons UAG and UAA. The protein is Peptide chain release factor 1 of Amoebophilus asiaticus (strain 5a2).